The sequence spans 127 residues: Protein YwpG (127 aa).

Interacts with both the D1 and D2 domains of dynamin-like protein DynA.

Its subcellular location is the cell membrane. The sequence is that of Protein YwpG (ywpG) from Bacillus subtilis (strain 168).